The following is a 174-amino-acid chain: CASP-like protein 1 (174 aa).

Residues 1 to 25 (MDSKSGRSESAINIPESNSTKHKST) form a disordered region. Residues 1–46 (MDSKSGRSESAINIPESNSTKHKSTAVHTATKVAAVAPRGGGWRRG) are Cytoplasmic-facing. Over residues 8-18 (SESAINIPESN) the composition is skewed to polar residues. The helical transmembrane segment at 47–67 (VSIFDFILRICALAAALAATA) threads the bilayer. The Extracellular segment spans residues 68–96 (TMGTTDQTLPFFTQIIQFQASYDDLPVFT). Residues 97-117 (FFVVANGIASGYLVLSLPFSI) traverse the membrane as a helical segment. The Cytoplasmic portion of the chain corresponds to 118 to 119 (AT). A helical membrane pass occupies residues 120–139 (IVRPHAAAIKLLLIIFDTQF). Over 140–150 (NDFCQRVSGAV) the chain is Extracellular. The helical transmembrane segment at 151–171 (VASFVAAVILIFLVVLSAVAI) threads the bilayer. Topologically, residues 172–174 (RKH) are cytoplasmic.

This sequence belongs to the Casparian strip membrane proteins (CASP) family. As to quaternary structure, homodimer and heterodimers.

The protein resides in the cell membrane. This Triphysaria pusilla (Dwarf owl's-clover) protein is CASP-like protein 1.